A 130-amino-acid polypeptide reads, in one-letter code: Small ribosomal subunit protein uS8 (130 aa).

Belongs to the universal ribosomal protein uS8 family. As to quaternary structure, part of the 30S ribosomal subunit.

One of the primary rRNA binding proteins, it binds directly to 16S rRNA central domain where it helps coordinate assembly of the platform of the 30S subunit. This chain is Small ribosomal subunit protein uS8, found in Methanosarcina mazei (strain ATCC BAA-159 / DSM 3647 / Goe1 / Go1 / JCM 11833 / OCM 88) (Methanosarcina frisia).